Consider the following 538-residue polypeptide: Calcium-dependent protein kinase 3 (538 aa).

A disordered region spans residues 23–70 (PKKSIERIKKKKDSNKSIKSQHKFEGSKISNKNNELKDVKSKDPKNYE). Positions 56-68 (NELKDVKSKDPKN) are enriched in basic and acidic residues. One can recognise a Protein kinase domain in the interval 112-367 (NLSEEPLGKG…ASEALKHPWF (256 aa)). ATP-binding positions include 118 to 126 (LGKGTYGCV) and lysine 141. Catalysis depends on aspartate 232, which acts as the Proton acceptor. The J domain autoinhibitory motif motif lies at 387–395 (NFKNYALLL). A j domain region spans residues 387-422 (NFKNYALLLKLQKLAMTIIAQQSNDYDLQQLKAVFL). Positions 396-405 (KLQKLAMTII) match the J domain EF-hand interaction motif motif. EF-hand domains follow at residues 412–447 (YDLQQLKAVFLYLDEDGKGNITKNQLKKGLENSGLK), 450–481 (QNFDVLLDQIDSDGSGRIDYTEFLAAALDRKH), and 482–517 (LSKKLIYCAFRVFDVDNDGEITTAELAHVTFFVILF). Ca(2+)-binding residues include aspartate 460, aspartate 462, serine 464, arginine 466, glutamate 471, aspartate 495, aspartate 497, aspartate 499, glutamate 501, and glutamate 506.

The protein belongs to the protein kinase superfamily. Ser/Thr protein kinase family. CDPK subfamily. The cofactor is Mg(2+).

It localises to the cytoplasm. The enzyme catalyses L-seryl-[protein] + ATP = O-phospho-L-seryl-[protein] + ADP + H(+). It carries out the reaction L-threonyl-[protein] + ATP = O-phospho-L-threonyl-[protein] + ADP + H(+). Its activity is regulated as follows. Activated by calcium. Upon calcium binding to the EF-hand domain 2, the C-terminus of the junction domain (J domain) undergoes a conformational change which results in the dissociation of the pseudo-substrate inhibitory motif from the catalytic domain. This, in turn, may facilitate the autophosphorylation of the activation loop at Thr-273, which leads to the kinase activation. Calcium-dependent protein kinase which acts as a sensor and effector of intracellular Ca(2+) levels probably in part downstream of cGMP-activated PKG kinase. In the mosquito midgut, regulates the gliding motility of the ookinete which is essential for the ookinete to invade the midgut epithelium. However, another study showed that while required for ookinete invasion of the midgut epithelium, is not required for ookinete gliding motility. The polypeptide is Calcium-dependent protein kinase 3 (Plasmodium yoelii yoelii).